A 242-amino-acid polypeptide reads, in one-letter code: Glucosamine-6-phosphate deaminase (242 aa).

Catalysis depends on Asp-67, which acts as the Proton acceptor; for enolization step. Residue Asn-137 is the For ring-opening step of the active site. The active-site Proton acceptor; for ring-opening step is the His-139. The For ring-opening step role is filled by Glu-144.

This sequence belongs to the glucosamine/galactosamine-6-phosphate isomerase family. NagB subfamily.

The catalysed reaction is alpha-D-glucosamine 6-phosphate + H2O = beta-D-fructose 6-phosphate + NH4(+). It functions in the pathway amino-sugar metabolism; N-acetylneuraminate degradation; D-fructose 6-phosphate from N-acetylneuraminate: step 5/5. Catalyzes the reversible isomerization-deamination of glucosamine 6-phosphate (GlcN6P) to form fructose 6-phosphate (Fru6P) and ammonium ion. The polypeptide is Glucosamine-6-phosphate deaminase (Staphylococcus saprophyticus subsp. saprophyticus (strain ATCC 15305 / DSM 20229 / NCIMB 8711 / NCTC 7292 / S-41)).